The chain runs to 437 residues: Methylenetetrahydrofolate--tRNA-(uracil-5-)-methyltransferase TrmFO (437 aa).

8 to 13 contributes to the FAD binding site; the sequence is GAGLAG.

The protein belongs to the MnmG family. TrmFO subfamily. It depends on FAD as a cofactor.

It is found in the cytoplasm. It catalyses the reaction uridine(54) in tRNA + (6R)-5,10-methylene-5,6,7,8-tetrahydrofolate + NADH + H(+) = 5-methyluridine(54) in tRNA + (6S)-5,6,7,8-tetrahydrofolate + NAD(+). It carries out the reaction uridine(54) in tRNA + (6R)-5,10-methylene-5,6,7,8-tetrahydrofolate + NADPH + H(+) = 5-methyluridine(54) in tRNA + (6S)-5,6,7,8-tetrahydrofolate + NADP(+). Catalyzes the folate-dependent formation of 5-methyl-uridine at position 54 (M-5-U54) in all tRNAs. In Desulfitobacterium hafniense (strain Y51), this protein is Methylenetetrahydrofolate--tRNA-(uracil-5-)-methyltransferase TrmFO.